Here is a 676-residue protein sequence, read N- to C-terminus: DNA ligase (676 aa).

NAD(+) is bound by residues 35–39 (DAEYD), 84–85 (SL), and glutamate 118. Lysine 120 serves as the catalytic N6-AMP-lysine intermediate. Residues arginine 141, glutamate 176, lysine 284, and lysine 308 each coordinate NAD(+). The Zn(2+) site is built by cysteine 402, cysteine 405, cysteine 420, and cysteine 426. Residues 595-676 (SYLSLIHGKI…WLQYTQSSEN (82 aa)) enclose the BRCT domain.

Belongs to the NAD-dependent DNA ligase family. LigA subfamily. Requires Mg(2+) as cofactor. Mn(2+) is required as a cofactor.

It carries out the reaction NAD(+) + (deoxyribonucleotide)n-3'-hydroxyl + 5'-phospho-(deoxyribonucleotide)m = (deoxyribonucleotide)n+m + AMP + beta-nicotinamide D-nucleotide.. DNA ligase that catalyzes the formation of phosphodiester linkages between 5'-phosphoryl and 3'-hydroxyl groups in double-stranded DNA using NAD as a coenzyme and as the energy source for the reaction. It is essential for DNA replication and repair of damaged DNA. The polypeptide is DNA ligase (Ehrlichia chaffeensis (strain ATCC CRL-10679 / Arkansas)).